The chain runs to 340 residues: Phosphoribosylformylglycinamidine cyclo-ligase (340 aa).

The protein belongs to the AIR synthase family.

Its subcellular location is the cytoplasm. The enzyme catalyses 2-formamido-N(1)-(5-O-phospho-beta-D-ribosyl)acetamidine + ATP = 5-amino-1-(5-phospho-beta-D-ribosyl)imidazole + ADP + phosphate + H(+). It functions in the pathway purine metabolism; IMP biosynthesis via de novo pathway; 5-amino-1-(5-phospho-D-ribosyl)imidazole from N(2)-formyl-N(1)-(5-phospho-D-ribosyl)glycinamide: step 2/2. This is Phosphoribosylformylglycinamidine cyclo-ligase from Streptococcus pneumoniae (strain Taiwan19F-14).